The primary structure comprises 615 residues: DNA mismatch repair protein MutL (615 aa).

Positions 363 to 397 (FAEPAAREPVAPRYTPAPASGSRPAAPWPNAQPGY) are disordered. Over residues 364–391 (AEPAAREPVAPRYTPAPASGSRPAAPWP) the composition is skewed to low complexity.

This sequence belongs to the DNA mismatch repair MutL/HexB family.

Functionally, this protein is involved in the repair of mismatches in DNA. It is required for dam-dependent methyl-directed DNA mismatch repair. May act as a 'molecular matchmaker', a protein that promotes the formation of a stable complex between two or more DNA-binding proteins in an ATP-dependent manner without itself being part of a final effector complex. This chain is DNA mismatch repair protein MutL, found in Escherichia coli O9:H4 (strain HS).